The chain runs to 194 residues: Protein LKAAEAR1 (194 aa).

Residues 1–45 (MPPPAKEGGRKGPRERSGKSAPGTAQGEERAKGAPATEPPKPGWA) are disordered. Residues 7–18 (EGGRKGPRERSG) are compositionally biased toward basic and acidic residues.

The polypeptide is Protein LKAAEAR1 (LKAAEAR1) (Homo sapiens (Human)).